The following is a 203-amino-acid chain: MSIKYVATSKLPTPWGVFAMHGFEDTETGKEHVALTFGTLSSDAPVLGRIHSECLTGDALFSLRCDCGFQLQTAMQNIAETGSGFILYLRQEGRGIGLLNKIRAYELQDKGANTVEANEQLGFPADMRKYDMIQPMLEQIGVKHVRLMTNNPRKVKAMKEIGIEVVERVPLQVGKNRYNEAYLKTKSTELGHMMSEYHFTDED.

49-53 (RIHSE) contacts GTP. Zn(2+) is bound by residues Cys-54, Cys-65, and Cys-67. GTP is bound by residues Gln-70, 92–94 (EGR), and Thr-114. Residue Asp-126 is the Proton acceptor of the active site. Arg-128 (nucleophile) is an active-site residue. GTP-binding residues include Thr-149 and Lys-154.

This sequence belongs to the GTP cyclohydrolase II family. Requires Zn(2+) as cofactor.

It catalyses the reaction GTP + 4 H2O = 2,5-diamino-6-hydroxy-4-(5-phosphoribosylamino)-pyrimidine + formate + 2 phosphate + 3 H(+). Its pathway is cofactor biosynthesis; riboflavin biosynthesis; 5-amino-6-(D-ribitylamino)uracil from GTP: step 1/4. Its function is as follows. Catalyzes the conversion of GTP to 2,5-diamino-6-ribosylamino-4(3H)-pyrimidinone 5'-phosphate (DARP), formate and pyrophosphate. The chain is GTP cyclohydrolase-2 from Shewanella sp. (strain MR-4).